The chain runs to 776 residues: MKEYYTISEKKLPIIALRGLWLFPNNIQHFEVGREVSLNALNASLLRNSEIFICTQKDPMLENITKEDFYHTGVLASIKQTIKMPNGNIRVLVEAYDRAKIVDFVENDSFLEANVEVMEYDKTKYHPTDKSLTMIRMIISSFESLAEIIKKPLPQDLLGGLLNEEDPSSLIDTIAMLISLNDKDSILLLETLDMDERIELVYKFVIKEIEFLKIKEDIEERTNKEISDTQKEYFLQEQLRQIKMELGEEYDIEDTDDYANRVKKLKLKKDSEEHVLKEINRLSSMNPNNPESTVIRNYIDQVLDIPWNKKSKSSIDLKVAEKVLNDGHFGLEDVKKRILEYLAVKKMTGSLKGPILCLVGPPGVGKTSIARSIADATNRKFVSMRLGGVRDEAEIRGHRKTYIGAMPGRIITQLQKAKKLNPVFLLDEIDKLASDFRGDPASALLEVLDPEQNSEFTDNYIEIPVDLSDVLFITTANSQEQIPDALLDRMEVIRVTSYTDSEKFEIANRYLLPRQLKENGMDKSQFHITRDAIYTIINNYTRESGVRELERNIGKVIRKAVVKIVKDDVKKVVVNNKNLEKFLGSKLVLDDEIPREDTVGVVNGLAWTQVGGVILTIEANVMDGSGKTQLTGKLGDVMKESAMAAISYIRSNQEALGIKGEFYKEKDIHIHVPEGAVPKDGPSAGVTMVTALVSALTGRKVKHDFAMTGEITLTGRVLAIGGVKEKVLAAHRYGINKVFLPKENKRDIQDIDPKIRQKIKFYFTSNVKEILDEVLI.

Positions 12–209 (LPIIALRGLW…LVYKFVIKEI (198 aa)) constitute a Lon N-terminal domain. 360 to 367 (GPPGVGKT) contacts ATP. One can recognise a Lon proteolytic domain in the interval 596–776 (EDTVGVVNGL…VKEILDEVLI (181 aa)). Residues Ser-683 and Lys-726 contribute to the active site.

This sequence belongs to the peptidase S16 family. As to quaternary structure, homohexamer. Organized in a ring with a central cavity.

It is found in the cytoplasm. The enzyme catalyses Hydrolysis of proteins in presence of ATP.. Functionally, ATP-dependent serine protease that mediates the selective degradation of mutant and abnormal proteins as well as certain short-lived regulatory proteins. Required for cellular homeostasis and for survival from DNA damage and developmental changes induced by stress. Degrades polypeptides processively to yield small peptide fragments that are 5 to 10 amino acids long. Binds to DNA in a double-stranded, site-specific manner. The chain is Lon protease from Finegoldia magna (strain ATCC 29328 / DSM 20472 / WAL 2508) (Peptostreptococcus magnus).